A 215-amino-acid polypeptide reads, in one-letter code: Cytochrome b6 (215 aa).

A helical membrane pass occupies residues 32-52; the sequence is IFYCLGGITLTCFLVQVATGF. Cys35 is a heme c binding site. Heme b-binding residues include His86 and His100. Helical transmembrane passes span 90–110, 116–136, and 186–206; these read ASMMVLMTILHVFRVYLTGGF, LTWVTGVVLAVLTASFGVTGY, and LHTFVLPLLTAVFMLMHFLMI. Heme b is bound by residues His187 and His202.

This sequence belongs to the cytochrome b family. PetB subfamily. The 4 large subunits of the cytochrome b6-f complex are cytochrome b6, subunit IV (17 kDa polypeptide, PetD), cytochrome f and the Rieske protein, while the 4 small subunits are PetG, PetL, PetM and PetN. The complex functions as a dimer. Heme b is required as a cofactor. Heme c serves as cofactor.

The protein localises to the plastid. It is found in the chloroplast thylakoid membrane. Its function is as follows. Component of the cytochrome b6-f complex, which mediates electron transfer between photosystem II (PSII) and photosystem I (PSI), cyclic electron flow around PSI, and state transitions. The sequence is that of Cytochrome b6 from Citrus sinensis (Sweet orange).